Consider the following 210-residue polypeptide: Imidazoleglycerol-phosphate dehydratase (210 aa).

Belongs to the imidazoleglycerol-phosphate dehydratase family.

It is found in the cytoplasm. The catalysed reaction is D-erythro-1-(imidazol-4-yl)glycerol 3-phosphate = 3-(imidazol-4-yl)-2-oxopropyl phosphate + H2O. It functions in the pathway amino-acid biosynthesis; L-histidine biosynthesis; L-histidine from 5-phospho-alpha-D-ribose 1-diphosphate: step 6/9. The polypeptide is Imidazoleglycerol-phosphate dehydratase (Acidovorax ebreus (strain TPSY) (Diaphorobacter sp. (strain TPSY))).